We begin with the raw amino-acid sequence, 178 residues long: CDP-archaeol synthase (178 aa).

Helical transmembrane passes span 3 to 23 (LLLL…ANAV), 56 to 76 (FFGI…VILY), 91 to 111 (IILS…GSFI), 131 to 151 (FIIF…NIIV), and 152 to 172 (LLLV…YKLH).

It belongs to the CDP-archaeol synthase family. Mg(2+) serves as cofactor.

Its subcellular location is the cell membrane. The enzyme catalyses 2,3-bis-O-(geranylgeranyl)-sn-glycerol 1-phosphate + CTP + H(+) = CDP-2,3-bis-O-(geranylgeranyl)-sn-glycerol + diphosphate. Its pathway is membrane lipid metabolism; glycerophospholipid metabolism. Functionally, catalyzes the formation of CDP-2,3-bis-(O-geranylgeranyl)-sn-glycerol (CDP-archaeol) from 2,3-bis-(O-geranylgeranyl)-sn-glycerol 1-phosphate (DGGGP) and CTP. This reaction is the third ether-bond-formation step in the biosynthesis of archaeal membrane lipids. This chain is CDP-archaeol synthase, found in Methanococcus maripaludis (strain DSM 14266 / JCM 13030 / NBRC 101832 / S2 / LL).